Reading from the N-terminus, the 185-residue chain is Ribosome-recycling factor (185 aa).

The protein belongs to the RRF family.

The protein resides in the cytoplasm. Its function is as follows. Responsible for the release of ribosomes from messenger RNA at the termination of protein biosynthesis. May increase the efficiency of translation by recycling ribosomes from one round of translation to another. This Sodalis glossinidius (strain morsitans) protein is Ribosome-recycling factor.